Here is a 99-residue protein sequence, read N- to C-terminus: Acylphosphatase (99 aa).

Positions 5–97 constitute an Acylphosphatase-like domain; that stretch reads VRQVTVQGRV…RPGERFSTLP (93 aa). Residues Arg20 and Asn38 contribute to the active site.

Belongs to the acylphosphatase family.

The enzyme catalyses an acyl phosphate + H2O = a carboxylate + phosphate + H(+). This Rhodopseudomonas palustris (strain BisB18) protein is Acylphosphatase (acyP).